A 102-amino-acid polypeptide reads, in one-letter code: Small ribosomal subunit protein uS10 (102 aa).

The protein belongs to the universal ribosomal protein uS10 family. In terms of assembly, part of the 30S ribosomal subunit.

Involved in the binding of tRNA to the ribosomes. This is Small ribosomal subunit protein uS10 from Methanococcus maripaludis (strain C5 / ATCC BAA-1333).